The following is a 138-amino-acid chain: Phospholipase A2 homolog (138 aa).

Positions 1-16 (MRALWIVAVWLIGVEG) are cleaved as a signal peptide. Cystine bridges form between cysteine 42–cysteine 131, cysteine 44–cysteine 60, cysteine 59–cysteine 111, cysteine 65–cysteine 138, cysteine 66–cysteine 104, cysteine 73–cysteine 97, and cysteine 91–cysteine 102. Residues 121–133 (KKYTYYPNFLCKG) form an important for membrane-damaging activities in eukaryotes and bacteria; heparin-binding region.

This sequence belongs to the phospholipase A2 family. Group II subfamily. S49 sub-subfamily. As to quaternary structure, monomer. Expressed by the venom gland.

The protein resides in the secreted. In terms of biological role, snake venom phospholipase A2 homolog that lacks enzymatic activity. Shows high myotoxin activities and displays edema-inducing activities. Has cytotoxic activities against HUVEC cells (LC(50)=5.0 uL) and human lung adenocarcinoma A549 cells (LC(50)=5.2 uL). This Echis ocellatus (Ocellated saw-scaled viper) protein is Phospholipase A2 homolog.